We begin with the raw amino-acid sequence, 465 residues long: Calcitonin gene-related peptide type 1 receptor (465 aa).

An N-terminal signal peptide occupies residues 1 to 17; sequence MVICLLLCTPTDIFVVA. Residues 18-141 lie on the Extracellular side of the membrane; sequence SPEVNETQEY…HTNEGRMTAM (124 aa). Residues Asn-22, Asn-68, Asn-120, and Asn-125 are each glycosylated (N-linked (GlcNAc...) asparagine). Disulfide bonds link Cys-50–Cys-76, Cys-67–Cys-107, and Cys-90–Cys-129. Residues 142-166 traverse the membrane as a helical segment; that stretch reads NLFYLALIGHGLSLTSLLISLGIFF. At 167–177 the chain is on the cytoplasmic side; sequence YFKSLSCQRIT. A helical membrane pass occupies residues 178-200; it reads LHKNLFFSFVLNSVITIIWLTAV. Over 201–211 the chain is Extracellular; it reads ANNQELVQRNP. The helical transmembrane segment at 212–240 threads the bilayer; the sequence is TSCKVSQFIHLYLFGCNYFWMLCEGIYLH. The Cytoplasmic portion of the chain corresponds to 241-254; sequence TLIVVAVFAEKQHL. A helical transmembrane segment spans residues 255–275; the sequence is MWYYLLGWGFPLIPASIHAIA. Residues 276–291 lie on the Extracellular side of the membrane; sequence RSYYYNDNCWISSNTS. A glycan (N-linked (GlcNAc...) asparagine) is linked at Asn-289. The helical transmembrane segment at 292–316 threads the bilayer; sequence LLYIIHGPICAALLVNLFFLLNIVR. At 317-331 the chain is on the cytoplasmic side; the sequence is VLITKLKVTHQAESS. Residues 332 to 353 form a helical membrane-spanning segment; sequence LYMKAVRATLILVPLLGIQYVL. Residues 354-368 lie on the Extracellular side of the membrane; it reads LPYKPEGRVSSEIYD. The helical transmembrane segment at 369–389 threads the bilayer; that stretch reads YIMHILMHYQGLLVATIFCFF. Over 390–465 the chain is Cytoplasmic; the sequence is NGEVQGVLRR…SILKSENPFT (76 aa).

Belongs to the G-protein coupled receptor 2 family.

Its subcellular location is the cell membrane. Functionally, may function as G protein-coupled receptor for calcitonin-gene-related peptides and adrenomedullin. Specificity may be modulated by accessory proteins. May activate cAMP-dependent pathway. The sequence is that of Calcitonin gene-related peptide type 1 receptor (calcrl) from Oncorhynchus gorbuscha (Pink salmon).